A 134-amino-acid polypeptide reads, in one-letter code: ATP synthase epsilon chain (134 aa).

Belongs to the ATPase epsilon chain family. F-type ATPases have 2 components, CF(1) - the catalytic core - and CF(0) - the membrane proton channel. CF(1) has five subunits: alpha(3), beta(3), gamma(1), delta(1), epsilon(1). CF(0) has three main subunits: a, b and c.

It is found in the cell membrane. Produces ATP from ADP in the presence of a proton gradient across the membrane. The protein is ATP synthase epsilon chain of Listeria monocytogenes serotype 4a (strain HCC23).